A 334-amino-acid chain; its full sequence is Malate dehydrogenase, cytoplasmic (334 aa).

Ser-2 bears the N-acetylserine mark. Residues 11-17 (GAAGQIA) and Asp-42 each bind NAD(+). Residues Arg-92 and Arg-98 each coordinate substrate. Asn-105 serves as a coordination point for NAD(+). At Lys-110 the chain carries N6-succinyllysine. Gln-112 is an NAD(+) binding site. An N6-acetyllysine mark is found at Lys-118 and Lys-121. NAD(+) is bound at residue 129-131 (VGN). Substrate-binding residues include Asn-131 and Arg-162. Residue His-187 is the Proton acceptor of the active site. Residue Lys-214 is modified to N6-succinyllysine. Ser-217 is subject to Phosphoserine. Position 230 is an omega-N-methylarginine (Arg-230). Position 241 is a phosphoserine (Ser-241). Lys-298 carries the post-translational modification N6-acetyllysine; alternate. At Lys-298 the chain carries N6-succinyllysine; alternate. Ser-309 bears the Phosphoserine mark. Residue Lys-318 is modified to N6-succinyllysine. A phosphoserine mark is found at Ser-332 and Ser-333.

Belongs to the LDH/MDH superfamily. MDH type 2 family. Homodimer. Post-translationally, ISGylated. Acetylation at Lys-118 dramatically enhances enzymatic activity and promotes adipogenic differentiation.

Its subcellular location is the cytoplasm. The protein resides in the cytosol. The enzyme catalyses (S)-malate + NAD(+) = oxaloacetate + NADH + H(+). It catalyses the reaction (2R)-2-hydroxy-3-(4-hydroxyphenyl)propanoate + NAD(+) = 3-(4-hydroxyphenyl)pyruvate + NADH + H(+). The catalysed reaction is (S)-2-hydroxyglutarate + NAD(+) = 2-oxoglutarate + NADH + H(+). Its function is as follows. Catalyzes the reduction of aromatic alpha-keto acids in the presence of NADH. Plays essential roles in the malate-aspartate shuttle and the tricarboxylic acid cycle, important in mitochondrial NADH supply for oxidative phosphorylation. Catalyzes the reduction of 2-oxoglutarate to 2-hydroxyglutarate, leading to elevated reactive oxygen species (ROS). The chain is Malate dehydrogenase, cytoplasmic (MDH1) from Felis catus (Cat).